Reading from the N-terminus, the 398-residue chain is 1-deoxy-D-xylulose 5-phosphate reductoisomerase (398 aa).

7 residues coordinate NADPH: threonine 11, glycine 12, serine 13, isoleucine 14, arginine 38, asparagine 39, and asparagine 125. Lysine 126 is a 1-deoxy-D-xylulose 5-phosphate binding site. Glutamate 127 is an NADPH binding site. Aspartate 151 is a Mn(2+) binding site. The 1-deoxy-D-xylulose 5-phosphate site is built by serine 152, glutamate 153, serine 179, and histidine 202. Glutamate 153 provides a ligand contact to Mn(2+). Glycine 208 contributes to the NADPH binding site. Residues serine 215, asparagine 220, lysine 221, and glutamate 224 each contribute to the 1-deoxy-D-xylulose 5-phosphate site. Glutamate 224 is a Mn(2+) binding site.

It belongs to the DXR family. It depends on Mg(2+) as a cofactor. The cofactor is Mn(2+).

It catalyses the reaction 2-C-methyl-D-erythritol 4-phosphate + NADP(+) = 1-deoxy-D-xylulose 5-phosphate + NADPH + H(+). The protein operates within isoprenoid biosynthesis; isopentenyl diphosphate biosynthesis via DXP pathway; isopentenyl diphosphate from 1-deoxy-D-xylulose 5-phosphate: step 1/6. Functionally, catalyzes the NADPH-dependent rearrangement and reduction of 1-deoxy-D-xylulose-5-phosphate (DXP) to 2-C-methyl-D-erythritol 4-phosphate (MEP). This chain is 1-deoxy-D-xylulose 5-phosphate reductoisomerase, found in Burkholderia lata (strain ATCC 17760 / DSM 23089 / LMG 22485 / NCIMB 9086 / R18194 / 383).